The following is a 378-amino-acid chain: Putative glycosyltransferase ORF378 (378 aa).

It belongs to the glycosyltransferase group 1 family. Glycosyltransferase 4 subfamily.

This Acidianus sp. F28 (AFV-2) protein is Putative glycosyltransferase ORF378.